The primary structure comprises 777 residues: Endonuclease MutS2 (777 aa).

An ATP-binding site is contributed by 328–335; sequence GPNTGGKT. The Smr domain maps to 702 to 777; that stretch reads LDLRGKRYEE…GSGCTIATLG (76 aa).

The protein belongs to the DNA mismatch repair MutS family. MutS2 subfamily. Homodimer. Binds to stalled ribosomes, contacting rRNA.

Endonuclease that is involved in the suppression of homologous recombination and thus may have a key role in the control of bacterial genetic diversity. Functionally, acts as a ribosome collision sensor, splitting the ribosome into its 2 subunits. Detects stalled/collided 70S ribosomes which it binds and splits by an ATP-hydrolysis driven conformational change. Acts upstream of the ribosome quality control system (RQC), a ribosome-associated complex that mediates the extraction of incompletely synthesized nascent chains from stalled ribosomes and their subsequent degradation. Probably generates substrates for RQC. This chain is Endonuclease MutS2, found in Streptococcus uberis (strain ATCC BAA-854 / 0140J).